The sequence spans 420 residues: Diaminobutyrate--2-oxoglutarate transaminase (420 aa).

Lys271 is modified (N6-(pyridoxal phosphate)lysine).

It belongs to the class-III pyridoxal-phosphate-dependent aminotransferase family. Pyridoxal 5'-phosphate is required as a cofactor.

The enzyme catalyses L-2,4-diaminobutanoate + 2-oxoglutarate = L-aspartate 4-semialdehyde + L-glutamate. The protein operates within amine and polyamine biosynthesis; ectoine biosynthesis; L-ectoine from L-aspartate 4-semialdehyde: step 1/3. Catalyzes reversively the conversion of L-aspartate beta-semialdehyde (ASA) to L-2,4-diaminobutyrate (DABA) by transamination with L-glutamate. The polypeptide is Diaminobutyrate--2-oxoglutarate transaminase (ectB) (Streptomyces anulatus (Streptomyces chrysomallus)).